Reading from the N-terminus, the 479-residue chain is Calcium uniporter protein, mitochondrial (479 aa).

A mitochondrion-targeting transit peptide spans 1–54 (MNHALRRATLGLSPGLRASRLQQSFAKHQIPAVYRCEAASTPLQRAFTTSRCFR). Topologically, residues 55–323 (QETAAESEKD…DTLAHQGAHR (269 aa)) are mitochondrial matrix. Disordered regions lie at residues 56 to 125 (ETAA…KGRL) and 206 to 238 (EADQ…HEGP). Residues 59 to 79 (AESEKDDAARREEQSERARKR) adopt a coiled-coil conformation. Residues 60 to 75 (ESEKDDAARREEQSER) are compositionally biased toward basic and acidic residues. Residues 83 to 93 (NVTSGSSAQTL) are compositionally biased toward polar residues. 2 stretches are compositionally biased toward basic and acidic residues: residues 94–122 (ENDR…DMKK) and 206–224 (EADQ…KKDN). A helical membrane pass occupies residues 324–344 (LAQGGFAALAGWWGVVYYVTF). Topologically, residues 345-354 (HTQAGWDLVE) are mitochondrial intermembrane. The short motif at 350-358 (WDLVEPVTY) is the Selectivity filter element. E354 provides a ligand contact to Ca(2+). The helical transmembrane segment at 355–375 (PVTYLAGLTTVMGAYLWFLYI) threads the bilayer. Residues 376–479 (SRDLSYKAAM…GSSDKIKKKQ (104 aa)) are Mitochondrial matrix-facing. A compositionally biased stretch (basic and acidic residues) spans 445 to 462 (KVLEEEKQGRDGTKVTEG). The disordered stretch occupies residues 445–479 (KVLEEEKQGRDGTKVTEGKDEDDGPGSSDKIKKKQ).

Belongs to the MCU (TC 1.A.77) family. As to quaternary structure, homotetramer, assembles in a dimer or dimers configuration with two interfaces.

It is found in the mitochondrion inner membrane. It catalyses the reaction Ca(2+)(in) = Ca(2+)(out). Functionally, highly selective calcium channel localized to the inner mitochondrial membrane, which mediates calcium uptake into the mitochondrial matrix. Mitochondrial calcium homeostasis plays key roles in cellular physiology and regulates ATP production, cytoplasmic calcium signals and activation of cell death pathways. Sufficient to operate as a pore-forming channel without the need of calcium-sensor or auxiliary subunit. The protein is Calcium uniporter protein, mitochondrial of Gibberella zeae (strain ATCC MYA-4620 / CBS 123657 / FGSC 9075 / NRRL 31084 / PH-1) (Wheat head blight fungus).